Here is a 325-residue protein sequence, read N- to C-terminus: G/U mismatch-specific uracil DNA glycosylase (325 aa).

A compositionally biased stretch (basic and acidic residues) spans 1-11 (MNDIETRDTGT). The disordered stretch occupies residues 1-50 (MNDIETRDTGTKNDNSSEFNLSVKSHKRKRSFDDENLELEESREETSGGI). A compositionally biased stretch (polar residues) spans 12-23 (KNDNSSEFNLSV). Residues 34 to 43 (DENLELEESR) are compositionally biased toward acidic residues.

It belongs to the uracil-DNA glycosylase (UDG) superfamily. TDG/mug family.

It localises to the nucleus. It catalyses the reaction Specifically hydrolyzes mismatched double-stranded DNA and polynucleotides, releasing free uracil.. In terms of biological role, removes uracil from G/U mispairs in ssDNA. Also corrects G/G mispairs. Does not catalyze the removal of thymine from G/T mispairs. The polypeptide is G/U mismatch-specific uracil DNA glycosylase (thp1) (Schizosaccharomyces pombe (strain 972 / ATCC 24843) (Fission yeast)).